A 480-amino-acid chain; its full sequence is Chromosomal replication initiator protein DnaA (480 aa).

The tract at residues 1-71 is domain I, interacts with DnaA modulators; sequence MNLTKVWNTT…REQLGSVVGF (71 aa). The tract at residues 71-139 is domain II; the sequence is FPVDVRIVLA…LELHRAVRSS (69 aa). The segment at 91–115 is disordered; the sequence is SINGRHAARDTRKSDHHAPLSGGYG. Residues 97-108 show a composition bias toward basic and acidic residues; the sequence is AARDTRKSDHHA. The segment at 140-356 is domain III, AAA+ region; sequence MLNPRYTFDR…GCLNRVTAYA (217 aa). Residues glycine 184, glycine 186, lysine 187, and threonine 188 each contribute to the ATP site. Residues 357-480 are domain IV, binds dsDNA; it reads QMYNIPVTIE…IRERLMNSAV (124 aa).

It belongs to the DnaA family. As to quaternary structure, oligomerizes as a right-handed, spiral filament on DNA at oriC.

Its subcellular location is the cytoplasm. Its function is as follows. Plays an essential role in the initiation and regulation of chromosomal replication. ATP-DnaA binds to the origin of replication (oriC) to initiate formation of the DNA replication initiation complex once per cell cycle. Binds the DnaA box (a 9 base pair repeat at the origin) and separates the double-stranded (ds)DNA. Forms a right-handed helical filament on oriC DNA; dsDNA binds to the exterior of the filament while single-stranded (ss)DNA is stabiized in the filament's interior. The ATP-DnaA-oriC complex binds and stabilizes one strand of the AT-rich DNA unwinding element (DUE), permitting loading of DNA polymerase. After initiation quickly degrades to an ADP-DnaA complex that is not apt for DNA replication. Binds acidic phospholipids. The sequence is that of Chromosomal replication initiator protein DnaA from Roseiflexus castenholzii (strain DSM 13941 / HLO8).